Here is a 376-residue protein sequence, read N- to C-terminus: Alcohol dehydrogenase 6 (376 aa).

Residues Cys-47, His-69, Cys-99, Cys-102, Cys-105, Cys-113, and Cys-175 each contribute to the Zn(2+) site. NAD(+) contacts are provided by residues 200–205, Asp-224, Arg-229, 293–295, and Arg-371; these read GLGGVG and VGA.

This sequence belongs to the zinc-containing alcohol dehydrogenase family. Class-V subfamily. In terms of assembly, dimer. Zn(2+) is required as a cofactor.

It localises to the cytoplasm. It catalyses the reaction a primary alcohol + NAD(+) = an aldehyde + NADH + H(+). The enzyme catalyses a secondary alcohol + NAD(+) = a ketone + NADH + H(+). Its function is as follows. Alcohol dehydrogenase. Catalyzes the NAD-dependent oxidation of primary alcohols to the corresponding aldehydes. Oxidizes secondary alcohols to the corresponding ketones. This Rattus norvegicus (Rat) protein is Alcohol dehydrogenase 6 (Adh6).